Reading from the N-terminus, the 254-residue chain is uncharacterized protein (254 aa).

The stretch at 66–111 (DMVSEMNKRMDDLAARIVVLEDEKAELRRINQRLTEKVRDKDMEKA) forms a coiled coil.

This is an uncharacterized protein from Ostreid herpesvirus 1 (isolate France) (OsHV-1).